Reading from the N-terminus, the 443-residue chain is Chorionicgonadotropic hormone-like protein (443 aa).

Residues 263-286 (RCAGRPCPRRHRRPCNASKSHRPM) show a composition bias toward basic residues. Residues 263 to 292 (RCAGRPCPRRHRRPCNASKSHRPMRMQQRD) are disordered.

This sequence to mammalian CGHB.

It is found in the secreted. The protein localises to the cell wall. Cell wall protein that resembles the beta subunit of human chorionic gonadotropin. Stimulates growth and change in morphology. The protein is Chorionicgonadotropic hormone-like protein (xcg) of Stenotrophomonas maltophilia (Pseudomonas maltophilia).